Here is a 405-residue protein sequence, read N- to C-terminus: Succinyl-CoA--L-malate CoA-transferase beta subunit (405 aa).

Catalysis depends on D175, which acts as the Nucleophile.

It belongs to the CoA-transferase III family. As to quaternary structure, forms a large complex composed of six heterodimers (alpha, beta).

It catalyses the reaction succinyl-CoA + (S)-malate = (S)-malyl-CoA + succinate. It carries out the reaction (3S)-citramalate + succinyl-CoA = (3S)-citramalyl-CoA + succinate. Involved in the 3-hydroxypropionate cycle used for autotrophic carbon dioxide fixation. Catalyzes the transfer of CoA moiety from succinyl-CoA to L-malate to yield L-malyl-CoA. This Chloroflexus aurantiacus (strain ATCC 29366 / DSM 635 / J-10-fl) protein is Succinyl-CoA--L-malate CoA-transferase beta subunit (smtB).